We begin with the raw amino-acid sequence, 354 residues long: 5,10-methenyltetrahydromethanopterin hydrogenase (354 aa).

The protein belongs to the HMD family.

The catalysed reaction is 5,10-methenyl-5,6,7,8-tetrahydromethanopterin + H2 = 5,10-methylenetetrahydromethanopterin + H(+). It functions in the pathway one-carbon metabolism; methanogenesis from CO(2); 5,10-methylene-5,6,7,8-tetrahydromethanopterin from 5,10-methenyl-5,6,7,8-tetrahydromethanopterin (hydrogen route): step 1/1. Its function is as follows. Catalyzes the reversible reduction of methenyl-H(4)MPT(+) to methylene-H(4)MPT. The polypeptide is 5,10-methenyltetrahydromethanopterin hydrogenase (Methanococcus maripaludis (strain DSM 14266 / JCM 13030 / NBRC 101832 / S2 / LL)).